The primary structure comprises 97 residues: YcgL domain-containing protein Psyr_1564 (97 aa).

Residues 3 to 87 (RICSIYRSPK…AEDDYIEHLP (85 aa)) enclose the YcgL domain.

This Pseudomonas syringae pv. syringae (strain B728a) protein is YcgL domain-containing protein Psyr_1564.